The chain runs to 153 residues: Ribosomal RNA large subunit methyltransferase H (153 aa).

Residues Leu75, Gly102, and 121 to 126 (LSPLTM) contribute to the S-adenosyl-L-methionine site.

This sequence belongs to the RNA methyltransferase RlmH family. Homodimer.

It is found in the cytoplasm. The catalysed reaction is pseudouridine(1915) in 23S rRNA + S-adenosyl-L-methionine = N(3)-methylpseudouridine(1915) in 23S rRNA + S-adenosyl-L-homocysteine + H(+). Its function is as follows. Specifically methylates the pseudouridine at position 1915 (m3Psi1915) in 23S rRNA. The sequence is that of Ribosomal RNA large subunit methyltransferase H from Nitratiruptor sp. (strain SB155-2).